A 651-amino-acid polypeptide reads, in one-letter code: Acetyl-coenzyme A synthetase (651 aa).

CoA is bound by residues 193-196, threonine 313, and asparagine 337; that span reads RAGR. Residues 389 to 391, 413 to 418, aspartate 502, and arginine 517 each bind ATP; these read GEP and DTWWQT. Residue serine 525 participates in CoA binding. An ATP-binding site is contributed by arginine 528. Valine 539, histidine 541, and valine 544 together coordinate Mg(2+). A CoA-binding site is contributed by arginine 586. At lysine 611 the chain carries N6-acetyllysine.

This sequence belongs to the ATP-dependent AMP-binding enzyme family. Requires Mg(2+) as cofactor. Acetylated. Deacetylation by the SIR2-homolog deacetylase activates the enzyme.

The enzyme catalyses acetate + ATP + CoA = acetyl-CoA + AMP + diphosphate. Catalyzes the conversion of acetate into acetyl-CoA (AcCoA), an essential intermediate at the junction of anabolic and catabolic pathways. AcsA undergoes a two-step reaction. In the first half reaction, AcsA combines acetate with ATP to form acetyl-adenylate (AcAMP) intermediate. In the second half reaction, it can then transfer the acetyl group from AcAMP to the sulfhydryl group of CoA, forming the product AcCoA. The sequence is that of Acetyl-coenzyme A synthetase from Shewanella denitrificans (strain OS217 / ATCC BAA-1090 / DSM 15013).